Here is a 413-residue protein sequence, read N- to C-terminus: Serine protease inhibitor A3L (413 aa).

Positions 1 to 28 (MAFIAALGLLMAGICPAVLCDGTLGRDT) are cleaved as a signal peptide. Serine 30 carries the phosphoserine modification. N-linked (GlcNAc...) asparagine glycosylation is found at asparagine 102, asparagine 182, asparagine 220, and asparagine 267. Residues 365 to 389 (GTEATAATGVATVIRRQPRTLNFNR) form an RCL region.

Belongs to the serpin family. In terms of processing, N-glycosylated. As to expression, liver.

It localises to the secreted. The protein is Serine protease inhibitor A3L (Serpina3l) of Rattus norvegicus (Rat).